Consider the following 296-residue polypeptide: 4-hydroxybenzoate octaprenyltransferase (296 aa).

8 consecutive transmembrane segments (helical) span residues 28–48 (PIGI…AGNG), 52–72 (LANV…GCCI), 102–122 (ALTL…CTNS), 145–167 (TYYP…FTAA), 174–196 (GAWL…YAMV), 219–239 (SIIL…GSRF), 241–261 (LGGW…WEYW), and 275–295 (FLHN…DYAL).

Belongs to the UbiA prenyltransferase family. Mg(2+) serves as cofactor.

The protein localises to the cell inner membrane. It catalyses the reaction all-trans-octaprenyl diphosphate + 4-hydroxybenzoate = 4-hydroxy-3-(all-trans-octaprenyl)benzoate + diphosphate. The protein operates within cofactor biosynthesis; ubiquinone biosynthesis. Catalyzes the prenylation of para-hydroxybenzoate (PHB) with an all-trans polyprenyl group. Mediates the second step in the final reaction sequence of ubiquinone-8 (UQ-8) biosynthesis, which is the condensation of the polyisoprenoid side chain with PHB, generating the first membrane-bound Q intermediate 3-octaprenyl-4-hydroxybenzoate. The chain is 4-hydroxybenzoate octaprenyltransferase from Pseudomonas putida (strain ATCC 700007 / DSM 6899 / JCM 31910 / BCRC 17059 / LMG 24140 / F1).